The sequence spans 1465 residues: DNA polymerase III polC-type (1465 aa).

One can recognise an Exonuclease domain in the interval 427-583 (YVVFDVETTG…YDAEATGRLL (157 aa)).

This sequence belongs to the DNA polymerase type-C family. PolC subfamily.

It localises to the cytoplasm. It catalyses the reaction DNA(n) + a 2'-deoxyribonucleoside 5'-triphosphate = DNA(n+1) + diphosphate. In terms of biological role, required for replicative DNA synthesis. This DNA polymerase also exhibits 3' to 5' exonuclease activity. This Streptococcus pyogenes serotype M3 (strain ATCC BAA-595 / MGAS315) protein is DNA polymerase III polC-type.